Reading from the N-terminus, the 473-residue chain is PPE family protein PPE37 (473 aa).

An Iron-binding motif motif is present at residues 203–206; sequence DFLE. The next 2 helical transmembrane spans lie at 227 to 247 and 250 to 270; these read VLDWFISFVSGPVFTFLAYLV and PLIYFGPFAPLTSPVLLPAGL.

Belongs to the mycobacterial PPE family.

The protein localises to the cell membrane. Its function is as follows. Essential for efficient heme-iron acquisition (HIA). Binds iron. Strains with a functional PPE37 can utilize low concentrations of hemin very efficiently in broth and on agar plates. During infection, might interfere with the pro-inflammatory cytokine response in infected macrophages. In vitro, incubation of the protein in the presence of M.tuberculosis proteases leads to the cleavage of PPE37 into two segments, the N- and C-terminal segments. Transfection of human monocytic THP-1 cell lines with the N-terminal segment leads to the proliferation and differentiation of THP-1 cells into adherent stellate cells with dendritic cell-like morphology. Transfection of THP-1 cells with the C-terminal segment leads to the apoptosis of the cells. Recombinant protein antigens display strong B-cell response in tuberculosis patients and immunized mice. The chain is PPE family protein PPE37 from Mycobacterium tuberculosis (strain ATCC 25618 / H37Rv).